The chain runs to 300 residues: Ribonuclease HIII (300 aa).

Residues 83–300 (IPIIGSDEVG…THKAQALLTK (218 aa)) form the RNase H type-2 domain. The a divalent metal cation site is built by Asp-89, Glu-90, and Asp-194.

It belongs to the RNase HII family. RnhC subfamily. It depends on Mn(2+) as a cofactor. The cofactor is Mg(2+).

The protein localises to the cytoplasm. It catalyses the reaction Endonucleolytic cleavage to 5'-phosphomonoester.. Functionally, endonuclease that specifically degrades the RNA of RNA-DNA hybrids. This is Ribonuclease HIII from Streptococcus pyogenes serotype M28 (strain MGAS6180).